The sequence spans 379 residues: Anhydro-N-acetylmuramic acid kinase (379 aa).

9–16 (GTSADGVD) provides a ligand contact to ATP.

It belongs to the anhydro-N-acetylmuramic acid kinase family.

It carries out the reaction 1,6-anhydro-N-acetyl-beta-muramate + ATP + H2O = N-acetyl-D-muramate 6-phosphate + ADP + H(+). Its pathway is amino-sugar metabolism; 1,6-anhydro-N-acetylmuramate degradation. It participates in cell wall biogenesis; peptidoglycan recycling. Catalyzes the specific phosphorylation of 1,6-anhydro-N-acetylmuramic acid (anhMurNAc) with the simultaneous cleavage of the 1,6-anhydro ring, generating MurNAc-6-P. Is required for the utilization of anhMurNAc either imported from the medium or derived from its own cell wall murein, and thus plays a role in cell wall recycling. This Parasynechococcus marenigrum (strain WH8102) protein is Anhydro-N-acetylmuramic acid kinase.